The sequence spans 940 residues: Isoleucine--tRNA ligase (940 aa).

The 'HIGH' region motif lies at 58–68 (PYANGSIHIGH). Glu564 serves as a coordination point for L-isoleucyl-5'-AMP. Residues 605-609 (KMSKS) carry the 'KMSKS' region motif. Position 608 (Lys608) interacts with ATP. Residues Cys903, Cys906, Cys923, and Cys926 each contribute to the Zn(2+) site.

This sequence belongs to the class-I aminoacyl-tRNA synthetase family. IleS type 1 subfamily. Monomer. Requires Zn(2+) as cofactor.

It localises to the cytoplasm. It catalyses the reaction tRNA(Ile) + L-isoleucine + ATP = L-isoleucyl-tRNA(Ile) + AMP + diphosphate. Functionally, catalyzes the attachment of isoleucine to tRNA(Ile). As IleRS can inadvertently accommodate and process structurally similar amino acids such as valine, to avoid such errors it has two additional distinct tRNA(Ile)-dependent editing activities. One activity is designated as 'pretransfer' editing and involves the hydrolysis of activated Val-AMP. The other activity is designated 'posttransfer' editing and involves deacylation of mischarged Val-tRNA(Ile). The polypeptide is Isoleucine--tRNA ligase (Shewanella baltica (strain OS185)).